A 685-amino-acid polypeptide reads, in one-letter code: N(6)-adenosine-methyltransferase MT-A70-like (685 aa).

Residues 464–465 (DI) and aspartate 482 each bind S-adenosyl-L-methionine. Residues 552 to 565 (RIIRTGRTGHWLNH) form a positively charged region required for RNA-binding region. Residues lysine 599, 622 to 625 (RMHN), and 635 to 636 (NQ) each bind S-adenosyl-L-methionine. Positions 657 to 685 (EIDVQPPSPPRASAMETDNEPMAIDSITA) are disordered. Position 664 is a phosphoserine (serine 664).

Belongs to the MT-A70-like family. In terms of assembly, interacts with FIP37. Interacts with MTB. Associates with MTB, FIP37, VIR and HAKAI to form the m6A writer complex which is essential for adenosine methylation at specific mRNA sequences.

Its subcellular location is the nucleus. The catalysed reaction is an adenosine in mRNA + S-adenosyl-L-methionine = an N(6)-methyladenosine in mRNA + S-adenosyl-L-homocysteine + H(+). Its function is as follows. Catalytic subunit of the N6-methyltransferase complex, a multiprotein complex that mediates N6-methyladenosine (m6A) methylation at the 5'-[AG]GAC-3' consensus sites of some mRNAs. Associates with MTB, FIP37, VIR and HAKAI to form the m6A writer complex which is essential for adenosine methylation at specific mRNA sequences. N6-methyladenosine (m6A) plays a role in mRNA stability, processing, translation efficiency and editing. This Arabidopsis thaliana (Mouse-ear cress) protein is N(6)-adenosine-methyltransferase MT-A70-like.